We begin with the raw amino-acid sequence, 290 residues long: Pre-mRNA-splicing factor cwf20 (290 aa).

Disordered stretches follow at residues 1–61 (MSLV…KSSF) and 114–134 (PNNSVSDLTSTGSSETVKKST). A compositionally biased stretch (polar residues) spans 114–128 (PNNSVSDLTSTGSSE).

Belongs to the 40S cdc5-associated complex (or cwf complex), a spliceosome sub-complex reminiscent of a late-stage spliceosome composed of the U2, U5 and U6 snRNAs and at least brr2, cdc5, cwf2/prp3, cwf3/syf1, cwf4/syf3, cwf5/ecm2, spp42/cwf6, cwf7/spf27, cwf8, cwf9, cwf10, cwf11, cwf12, prp45/cwf13, cwf14, cwf15, cwf16, cwf17, cwf18, cwf19, cwf20, cwf21, cwf22, cwf23, cwf24, cwf25, cwf26, cyp7/cwf27, cwf28, cwf29/ist3, lea1, msl1, prp5/cwf1, prp10, prp12/sap130, prp17, prp22, sap61, sap62, sap114, sap145, slu7, smb1, smd1, smd3, smf1, smg1 and syf2.

The protein resides in the nucleus. Involved in mRNA splicing where it associates with cdc5 and the other cwf proteins as part of the spliceosome. This Schizosaccharomyces pombe (strain 972 / ATCC 24843) (Fission yeast) protein is Pre-mRNA-splicing factor cwf20 (cwf20).